Reading from the N-terminus, the 556-residue chain is 2-isopropylmalate synthase (556 aa).

The region spanning 33–307 (PIWCSSDLRD…DPELDFSDID (275 aa)) is the Pyruvate carboxyltransferase domain. The Mg(2+) site is built by aspartate 42, histidine 246, histidine 248, and asparagine 282. A regulatory domain region spans residues 439-556 (ANTPYALISH…SLSQTQAKAA (118 aa)).

It belongs to the alpha-IPM synthase/homocitrate synthase family. LeuA type 2 subfamily. As to quaternary structure, homodimer. Requires Mg(2+) as cofactor.

It localises to the cytoplasm. The catalysed reaction is 3-methyl-2-oxobutanoate + acetyl-CoA + H2O = (2S)-2-isopropylmalate + CoA + H(+). The protein operates within amino-acid biosynthesis; L-leucine biosynthesis; L-leucine from 3-methyl-2-oxobutanoate: step 1/4. Catalyzes the condensation of the acetyl group of acetyl-CoA with 3-methyl-2-oxobutanoate (2-ketoisovalerate) to form 3-carboxy-3-hydroxy-4-methylpentanoate (2-isopropylmalate). The polypeptide is 2-isopropylmalate synthase (Pseudomonas savastanoi pv. phaseolicola (strain 1448A / Race 6) (Pseudomonas syringae pv. phaseolicola (strain 1448A / Race 6))).